Reading from the N-terminus, the 156-residue chain is MPRWGYSVKLRDESEVAKAVLRNVPVHPKIMAEVARAISGMRVDEARRYLRAVIEKREAVPFRRAHGKQAHRRGLADKWGWPVGRYPVKAARYMLKLLDNVEANAANKNLDVERLKIIHVAAHKGITLKRWMPRAWGRATPRNRVHSHIEIMVREV.

Belongs to the universal ribosomal protein uL22 family. In terms of assembly, part of the 50S ribosomal subunit.

Its function is as follows. This protein binds specifically to 23S rRNA. It makes multiple contacts with different domains of the 23S rRNA in the assembled 50S subunit and ribosome. In terms of biological role, the globular domain of the protein is located near the polypeptide exit tunnel on the outside of the subunit, while an extended beta-hairpin is found that lines the wall of the exit tunnel in the center of the 70S ribosome. In Aeropyrum pernix (strain ATCC 700893 / DSM 11879 / JCM 9820 / NBRC 100138 / K1), this protein is Large ribosomal subunit protein uL22.